A 110-amino-acid polypeptide reads, in one-letter code: MSQGVEFNRLMLDMRAMQADAMSLPKVTAAPELAPGQSTFADMLGQAIGKVHETQQASTQLANAFEIGKSGVDLTDVMIASQKASVSMQAMTQVRNKLVQAYQDIMQMPV.

The protein belongs to the FliE family.

The protein localises to the bacterial flagellum basal body. In Pseudomonas putida (strain GB-1), this protein is Flagellar hook-basal body complex protein FliE.